Consider the following 271-residue polypeptide: 3-methyl-2-oxobutanoate hydroxymethyltransferase (271 aa).

2 residues coordinate Mg(2+): D51 and D90. 3-methyl-2-oxobutanoate-binding positions include D51–S52, D90, and K118. E120 serves as a coordination point for Mg(2+). Residue E186 is the Proton acceptor of the active site.

This sequence belongs to the PanB family. As to quaternary structure, homodecamer; pentamer of dimers. Mg(2+) is required as a cofactor.

The protein resides in the cytoplasm. It catalyses the reaction 3-methyl-2-oxobutanoate + (6R)-5,10-methylene-5,6,7,8-tetrahydrofolate + H2O = 2-dehydropantoate + (6S)-5,6,7,8-tetrahydrofolate. Its pathway is cofactor biosynthesis; (R)-pantothenate biosynthesis; (R)-pantoate from 3-methyl-2-oxobutanoate: step 1/2. In terms of biological role, catalyzes the reversible reaction in which hydroxymethyl group from 5,10-methylenetetrahydrofolate is transferred onto alpha-ketoisovalerate to form ketopantoate. This chain is 3-methyl-2-oxobutanoate hydroxymethyltransferase, found in Xanthomonas oryzae pv. oryzae (strain MAFF 311018).